A 419-amino-acid polypeptide reads, in one-letter code: Gamma-glutamyl phosphate reductase (419 aa).

Belongs to the gamma-glutamyl phosphate reductase family.

Its subcellular location is the cytoplasm. It catalyses the reaction L-glutamate 5-semialdehyde + phosphate + NADP(+) = L-glutamyl 5-phosphate + NADPH + H(+). It participates in amino-acid biosynthesis; L-proline biosynthesis; L-glutamate 5-semialdehyde from L-glutamate: step 2/2. Functionally, catalyzes the NADPH-dependent reduction of L-glutamate 5-phosphate into L-glutamate 5-semialdehyde and phosphate. The product spontaneously undergoes cyclization to form 1-pyrroline-5-carboxylate. In Ruthia magnifica subsp. Calyptogena magnifica, this protein is Gamma-glutamyl phosphate reductase.